The chain runs to 393 residues: Venom metalloproteinase BumaMPs1 (393 aa).

The first 15 residues, 1–15 (MFVHLLVLLFAAVEA), serve as a signal peptide directing secretion. Residue asparagine 158 is glycosylated (N-linked (GlcNAc...) asparagine). Positions 167–377 (KCVKIEYVFV…RVEELITRRK (211 aa)) constitute a Peptidase M12B domain. Histidine 323 provides a ligand contact to Zn(2+). Residue glutamate 324 is part of the active site. Histidine 327 and histidine 333 together coordinate Zn(2+). A disintegrin-like domain region spans residues 378 to 393 (INHCIVETCDGKRKRN).

Belongs to the venom metalloproteinase (M12B) family. Zn(2+) serves as cofactor. In terms of processing, contains several disulfide bonds. As to expression, expressed by the venom gland.

The protein resides in the secreted. Metalloprotease. The chain is Venom metalloproteinase BumaMPs1 from Olivierus martensii (Manchurian scorpion).